Consider the following 444-residue polypeptide: Methylenetetrahydrofolate--tRNA-(uracil-5-)-methyltransferase TrmFO (444 aa).

9 to 14 (GAGMAG) contacts FAD.

It belongs to the MnmG family. TrmFO subfamily. It depends on FAD as a cofactor.

The protein localises to the cytoplasm. It carries out the reaction uridine(54) in tRNA + (6R)-5,10-methylene-5,6,7,8-tetrahydrofolate + NADH + H(+) = 5-methyluridine(54) in tRNA + (6S)-5,6,7,8-tetrahydrofolate + NAD(+). The catalysed reaction is uridine(54) in tRNA + (6R)-5,10-methylene-5,6,7,8-tetrahydrofolate + NADPH + H(+) = 5-methyluridine(54) in tRNA + (6S)-5,6,7,8-tetrahydrofolate + NADP(+). Functionally, catalyzes the folate-dependent formation of 5-methyl-uridine at position 54 (M-5-U54) in all tRNAs. The polypeptide is Methylenetetrahydrofolate--tRNA-(uracil-5-)-methyltransferase TrmFO (Cereibacter sphaeroides (strain ATCC 17023 / DSM 158 / JCM 6121 / CCUG 31486 / LMG 2827 / NBRC 12203 / NCIMB 8253 / ATH 2.4.1.) (Rhodobacter sphaeroides)).